Consider the following 227-residue polypeptide: Phosphoribosylformylglycinamidine synthase subunit PurQ (227 aa).

Residues 3–227 (FAVCVFPGSN…LMLWYSLLSD (225 aa)) enclose the Glutamine amidotransferase type-1 domain. Cys-86 (nucleophile) is an active-site residue. Catalysis depends on residues His-203 and Glu-205.

In terms of assembly, part of the FGAM synthase complex composed of 1 PurL, 1 PurQ and 2 PurS subunits.

It localises to the cytoplasm. It catalyses the reaction N(2)-formyl-N(1)-(5-phospho-beta-D-ribosyl)glycinamide + L-glutamine + ATP + H2O = 2-formamido-N(1)-(5-O-phospho-beta-D-ribosyl)acetamidine + L-glutamate + ADP + phosphate + H(+). The catalysed reaction is L-glutamine + H2O = L-glutamate + NH4(+). The protein operates within purine metabolism; IMP biosynthesis via de novo pathway; 5-amino-1-(5-phospho-D-ribosyl)imidazole from N(2)-formyl-N(1)-(5-phospho-D-ribosyl)glycinamide: step 1/2. Its function is as follows. Part of the phosphoribosylformylglycinamidine synthase complex involved in the purines biosynthetic pathway. Catalyzes the ATP-dependent conversion of formylglycinamide ribonucleotide (FGAR) and glutamine to yield formylglycinamidine ribonucleotide (FGAM) and glutamate. The FGAM synthase complex is composed of three subunits. PurQ produces an ammonia molecule by converting glutamine to glutamate. PurL transfers the ammonia molecule to FGAR to form FGAM in an ATP-dependent manner. PurS interacts with PurQ and PurL and is thought to assist in the transfer of the ammonia molecule from PurQ to PurL. The sequence is that of Phosphoribosylformylglycinamidine synthase subunit PurQ from Aquifex aeolicus (strain VF5).